Reading from the N-terminus, the 166-residue chain is MRVMGIDCGSEYTGFGIVESDDRARLHCIVAGAVHLSARDPLENKLAKIFRELCSVIREHDPEVVAIEDVFYAVNAKSALKLGHVRGVAMLAVAECGLRVATYAPLAVKSAVVGYGKAEKCQVQAMVARLLNLPQVPEPADVADALAIAICHLHTSATLTRMHAKA.

Active-site residues include Asp7, Glu68, and Asp141. Mg(2+) is bound by residues Asp7, Glu68, and Asp141.

Belongs to the RuvC family. As to quaternary structure, homodimer which binds Holliday junction (HJ) DNA. The HJ becomes 2-fold symmetrical on binding to RuvC with unstacked arms; it has a different conformation from HJ DNA in complex with RuvA. In the full resolvosome a probable DNA-RuvA(4)-RuvB(12)-RuvC(2) complex forms which resolves the HJ. It depends on Mg(2+) as a cofactor.

Its subcellular location is the cytoplasm. The catalysed reaction is Endonucleolytic cleavage at a junction such as a reciprocal single-stranded crossover between two homologous DNA duplexes (Holliday junction).. In terms of biological role, the RuvA-RuvB-RuvC complex processes Holliday junction (HJ) DNA during genetic recombination and DNA repair. Endonuclease that resolves HJ intermediates. Cleaves cruciform DNA by making single-stranded nicks across the HJ at symmetrical positions within the homologous arms, yielding a 5'-phosphate and a 3'-hydroxyl group; requires a central core of homology in the junction. The consensus cleavage sequence is 5'-(A/T)TT(C/G)-3'. Cleavage occurs on the 3'-side of the TT dinucleotide at the point of strand exchange. HJ branch migration catalyzed by RuvA-RuvB allows RuvC to scan DNA until it finds its consensus sequence, where it cleaves and resolves the cruciform DNA. The protein is Crossover junction endodeoxyribonuclease RuvC of Koribacter versatilis (strain Ellin345).